A 341-amino-acid polypeptide reads, in one-letter code: MHIVLEFFLVTFRVLWAFVLAAAKWFVRPKDKNVAGQVCLITGAGSGLGRLFALEFARRRAQLVLWDINPQSNEETADMVRDIYRQLQAEDSARRANSSADEEVLPCCNLQVYTYTCDVGKRESVYSTAERVRREVGDVYLLLNNAGVVSGHHLLECPDELIERTMMVNCHAHFWTTKAFLPKMMEMNHGHIVSVASSLGLFSTAGVEDYCASKFGVVGFHESLSHELKAADKDGIKTTLVCPYLVDTGMFRGCRIRKEIEPFLPPLKPDYCVKQAMRAILTDQPMICTPRLMYIVLCMKSILPFEAVVCMYRFLGADKCMYPFIAQRKQATNNNETKNGI.

A helical; Signal-anchor membrane pass occupies residues 3-23; that stretch reads IVLEFFLVTFRVLWAFVLAAA. An NADP(+)-binding site is contributed by 40–64; sequence LITGAGSGLGRLFALEFARRRAQLV. S197 contacts substrate. Y210 functions as the Proton acceptor in the catalytic mechanism.

Belongs to the short-chain dehydrogenases/reductases (SDR) family.

Its subcellular location is the microsome membrane. The protein resides in the endoplasmic reticulum membrane. The enzyme catalyses all-trans-retinol + NADP(+) = all-trans-retinal + NADPH + H(+). It participates in cofactor metabolism; retinol metabolism. Its function is as follows. Retinol dehydrogenase with a clear preference for NADP. Converts all-trans-retinol to all-trans-retinal. Has no detectable activity towards 11-cis-retinol, 9-cis-retinol and 13-cis-retinol. The chain is Retinol dehydrogenase 10-B (rdh10-b) from Xenopus laevis (African clawed frog).